Reading from the N-terminus, the 121-residue chain is MARIAGVDIPNDKRVVISLTYVYGIGLATSKKILAAAGISEDVRVRDLTSDQEDAIRREVDAIKVEGDLRREVNLNIKRLMEIGSYRGIRHRRGLPVRGQNTKNNARTRKGKAVAIAGKKK.

Residues 96-121 (PVRGQNTKNNARTRKGKAVAIAGKKK) are disordered. Residues 106-121 (ARTRKGKAVAIAGKKK) show a composition bias toward basic residues.

Belongs to the universal ribosomal protein uS13 family. As to quaternary structure, part of the 30S ribosomal subunit. Forms a loose heterodimer with protein S19. Forms two bridges to the 50S subunit in the 70S ribosome.

Functionally, located at the top of the head of the 30S subunit, it contacts several helices of the 16S rRNA. In the 70S ribosome it contacts the 23S rRNA (bridge B1a) and protein L5 of the 50S subunit (bridge B1b), connecting the 2 subunits; these bridges are implicated in subunit movement. Contacts the tRNAs in the A and P-sites. The sequence is that of Small ribosomal subunit protein uS13 from Streptococcus pneumoniae serotype 4 (strain ATCC BAA-334 / TIGR4).